The chain runs to 303 residues: Methionyl-tRNA formyltransferase (303 aa).

Serine 111–proline 114 provides a ligand contact to (6S)-5,6,7,8-tetrahydrofolate.

The protein belongs to the Fmt family.

The enzyme catalyses L-methionyl-tRNA(fMet) + (6R)-10-formyltetrahydrofolate = N-formyl-L-methionyl-tRNA(fMet) + (6S)-5,6,7,8-tetrahydrofolate + H(+). Its function is as follows. Attaches a formyl group to the free amino group of methionyl-tRNA(fMet). The formyl group appears to play a dual role in the initiator identity of N-formylmethionyl-tRNA by promoting its recognition by IF2 and preventing the misappropriation of this tRNA by the elongation apparatus. The protein is Methionyl-tRNA formyltransferase of Ehrlichia chaffeensis (strain ATCC CRL-10679 / Arkansas).